Here is a 1445-residue protein sequence, read N- to C-terminus: ABC-type transporter FGSG_00046 (1445 aa).

The next 11 helical transmembrane spans lie at 21–41, 77–97, 119–138, 150–170, 187–207, 255–277, 297–317, 368–388, 392–412, 481–501, and 520–540; these read LFEE…MLLV, LILW…AAAL, PSSL…VTRV, ISIL…FESL, EIVG…FILG, TLLR…PLLL, YGLI…TALA, LQFV…IFLL, VALG…GTVL, VFST…YVLM, and SLFS…PAIF. Residues 259–541 enclose the ABC transmembrane type-1 1 domain; it reads GGLCRLFTAL…FLTSVPAIFS (283 aa). The region spanning 595–821 is the ABC transporter 1 domain; sequence IRDGSVRWKG…DEIEASTYSR (227 aa). Residue 627–634 coordinates ATP; it reads GSVGSGKS. A disordered region spans residues 803-850; sequence RNTQKDMQDDEIEASTYSREQNGPKKQEEDANHESNQSPETSQEHELA. The span at 824-835 shows a compositional bias: basic and acidic residues; the sequence is NGPKKQEEDANH. The next 6 membrane-spanning stretches (helical) occupy residues 868-888, 912-932, 1004-1024, 1026-1046, 1116-1136, and 1147-1167; these read GMGF…WQNF, IGVY…VTWF, IPLT…QLVM, SIGT…LAII, LTLV…GVTI, and IGLA…LLTW. Residues 974–1173 enclose the ABC transmembrane type-1 2 domain; that stretch reads HRAPMSYFES…LLTWWTMMEA (200 aa). Residues 1210-1441 enclose the ABC transporter 2 domain; sequence IELKELSASY…DVSLFQDLFS (232 aa). 1244-1251 lines the ATP pocket; the sequence is GRTGSGKT.

This sequence belongs to the ABC transporter superfamily. ABCC family.

Its subcellular location is the cell membrane. Functionally, ABC-type transporter; part of the gene cluster that mediates the biosynthesis of gramillins A and B, bicyclic lipopeptides that induce cell death in maize leaves but not in wheat leaves. May be involved in the secretion of gramillins. The sequence is that of ABC-type transporter FGSG_00046 from Gibberella zeae (strain ATCC MYA-4620 / CBS 123657 / FGSC 9075 / NRRL 31084 / PH-1) (Wheat head blight fungus).